The chain runs to 112 residues: T cell receptor alpha variable 34 (112 aa).

The N-terminal stretch at Met-1 to Ser-21 is a signal peptide. An Ig-like domain is found at Gln-22–Asp-112. Asn-38 and Asn-42 each carry an N-linked (GlcNAc...) asparagine glycan. Residues Cys-43 and Cys-109 are joined by a disulfide bond.

As to quaternary structure, alpha-beta TR is a heterodimer composed of an alpha and beta chain; disulfide-linked. The alpha-beta TR is associated with the transmembrane signaling CD3 coreceptor proteins to form the TR-CD3 (TcR or TCR). The assembly of alpha-beta TR heterodimers with CD3 occurs in the endoplasmic reticulum where a single alpha-beta TR heterodimer associates with one CD3D-CD3E heterodimer, one CD3G-CD3E heterodimer and one CD247 homodimer forming a stable octameric structure. CD3D-CD3E and CD3G-CD3E heterodimers preferentially associate with TR alpha and TR beta chains, respectively. The association of the CD247 homodimer is the last step of TcR assembly in the endoplasmic reticulum and is required for transport to the cell surface.

The protein localises to the cell membrane. In terms of biological role, v region of the variable domain of T cell receptor (TR) alpha chain that participates in the antigen recognition. Alpha-beta T cell receptors are antigen specific receptors which are essential to the immune response and are present on the cell surface of T lymphocytes. Recognize peptide-major histocompatibility (MH) (pMH) complexes that are displayed by antigen presenting cells (APC), a prerequisite for efficient T cell adaptive immunity against pathogens. Binding of alpha-beta TR to pMH complex initiates TR-CD3 clustering on the cell surface and intracellular activation of LCK that phosphorylates the ITAM motifs of CD3G, CD3D, CD3E and CD247 enabling the recruitment of ZAP70. In turn ZAP70 phosphorylates LAT, which recruits numerous signaling molecules to form the LAT signalosome. The LAT signalosome propagates signal branching to three major signaling pathways, the calcium, the mitogen-activated protein kinase (MAPK) kinase and the nuclear factor NF-kappa-B (NF-kB) pathways, leading to the mobilization of transcription factors that are critical for gene expression and essential for T cell growth and differentiation. The T cell repertoire is generated in the thymus, by V-(D)-J rearrangement. This repertoire is then shaped by intrathymic selection events to generate a peripheral T cell pool of self-MH restricted, non-autoaggressive T cells. Post-thymic interaction of alpha-beta TR with the pMH complexes shapes TR structural and functional avidity. The sequence is that of T cell receptor alpha variable 34 from Homo sapiens (Human).